Here is a 472-residue protein sequence, read N- to C-terminus: Lycopene beta cyclase, chloroplastic (472 aa).

A chloroplast-targeting transit peptide spans 1–25 (MDALLTSPFIPLKKPSHNRKSNTTT). The disordered stretch occupies residues 1–27 (MDALLTSPFIPLKKPSHNRKSNTTTAS). NAD(+) is bound at residue 62 to 90 (LAVVGGGPAGLAVAKRVSDAGLSVCSIDP).

This sequence belongs to the lycopene cyclase family. As to expression, expressed in flower buds and lips. Detected in roots and leaves.

It localises to the plastid. Its subcellular location is the chloroplast. The catalysed reaction is a carotenoid psi-end group = a carotenoid beta-end derivative. Its pathway is carotenoid biosynthesis; beta-carotene biosynthesis. The protein operates within carotenoid biosynthesis; beta-zeacarotene biosynthesis. In terms of biological role, catalyzes the double cyclization reaction which converts lycopene to beta-carotene and neurosporene to beta-zeacarotene. The chain is Lycopene beta cyclase, chloroplastic (LCY-B) from Oncidium hybrid cultivar (Orchid).